Here is a 227-residue protein sequence, read N- to C-terminus: Cytochrome c oxidase subunit 2 (227 aa).

Topologically, residues 1–14 (MAYPFQLGLQDASS) are mitochondrial intermembrane. A helical membrane pass occupies residues 15–45 (PIMEELTNFHDHTLMIVFLISSLVLYIISSM). At 46 to 59 (LTTKMTHTSTMDAQ) the chain is on the mitochondrial matrix side. Residues 60 to 87 (EVETIWTVLPAVILILIALPSLRILYMM) traverse the membrane as a helical segment. The Mitochondrial intermembrane segment spans residues 88-227 (DEINNPVLTV…HFENWSTSMI (140 aa)). Residues His-161, Cys-196, Glu-198, Cys-200, His-204, and Met-207 each contribute to the Cu cation site. Glu-198 is a Mg(2+) binding site.

It belongs to the cytochrome c oxidase subunit 2 family. Component of the cytochrome c oxidase (complex IV, CIV), a multisubunit enzyme composed of 14 subunits. The complex is composed of a catalytic core of 3 subunits MT-CO1, MT-CO2 and MT-CO3, encoded in the mitochondrial DNA, and 11 supernumerary subunits COX4I, COX5A, COX5B, COX6A, COX6B, COX6C, COX7A, COX7B, COX7C, COX8 and NDUFA4, which are encoded in the nuclear genome. The complex exists as a monomer or a dimer and forms supercomplexes (SCs) in the inner mitochondrial membrane with NADH-ubiquinone oxidoreductase (complex I, CI) and ubiquinol-cytochrome c oxidoreductase (cytochrome b-c1 complex, complex III, CIII), resulting in different assemblies (supercomplex SCI(1)III(2)IV(1) and megacomplex MCI(2)III(2)IV(2)). Found in a complex with TMEM177, COA6, COX18, COX20, SCO1 and SCO2. Interacts with TMEM177 in a COX20-dependent manner. Interacts with COX20. Interacts with COX16. It depends on Cu cation as a cofactor.

It is found in the mitochondrion inner membrane. The catalysed reaction is 4 Fe(II)-[cytochrome c] + O2 + 8 H(+)(in) = 4 Fe(III)-[cytochrome c] + 2 H2O + 4 H(+)(out). In terms of biological role, component of the cytochrome c oxidase, the last enzyme in the mitochondrial electron transport chain which drives oxidative phosphorylation. The respiratory chain contains 3 multisubunit complexes succinate dehydrogenase (complex II, CII), ubiquinol-cytochrome c oxidoreductase (cytochrome b-c1 complex, complex III, CIII) and cytochrome c oxidase (complex IV, CIV), that cooperate to transfer electrons derived from NADH and succinate to molecular oxygen, creating an electrochemical gradient over the inner membrane that drives transmembrane transport and the ATP synthase. Cytochrome c oxidase is the component of the respiratory chain that catalyzes the reduction of oxygen to water. Electrons originating from reduced cytochrome c in the intermembrane space (IMS) are transferred via the dinuclear copper A center (CU(A)) of subunit 2 and heme A of subunit 1 to the active site in subunit 1, a binuclear center (BNC) formed by heme A3 and copper B (CU(B)). The BNC reduces molecular oxygen to 2 water molecules using 4 electrons from cytochrome c in the IMS and 4 protons from the mitochondrial matrix. This is Cytochrome c oxidase subunit 2 (MT-CO2) from Lophuromys flavopunctatus (Yellow-spotted brush-furred rat).